The chain runs to 628 residues: Probable potassium transport system protein Kup (628 aa).

11 helical membrane-spanning segments follow: residues 56–76 (ILSLVVWTLTVIVSLKYVLLI), 109–129 (LILGVFGTAIFFGDGVITPAI), 141–161 (AAPGLHRYVVPVTLVVLTLLF), 174–194 (FFGPVTAVWFIVLALLGVVHI), 209–229 (ALAFMWQHPGTAFVSLGAVVL), 253–273 (WFSLVMPALMINYFGQGAMLL), 295–315 (LIVLATLATVIASQALITAAF), 343–363 (IYVPFVNWGLYACIVLAVVTF), 372–392 (AYGIAVTTDMLITTTMTFFVI), 400–420 (WALCVAATGFFFLVDAMFFAA), and 425–445 (ILDGGWFPLAIGAAMFTLMMT).

Belongs to the HAK/KUP transporter (TC 2.A.72) family.

Its subcellular location is the cell inner membrane. The catalysed reaction is K(+)(in) + H(+)(in) = K(+)(out) + H(+)(out). In terms of biological role, transport of potassium into the cell. Likely operates as a K(+):H(+) symporter. The chain is Probable potassium transport system protein Kup from Methylibium petroleiphilum (strain ATCC BAA-1232 / LMG 22953 / PM1).